Reading from the N-terminus, the 198-residue chain is Segregation and condensation protein B (198 aa).

Positions 168-198 (KLADPATDEPDQNEMDLFFDRFNQSKEQEEE) are disordered.

It belongs to the ScpB family. As to quaternary structure, homodimer. Homodimerization may be required to stabilize the binding of ScpA to the Smc head domains. Component of a cohesin-like complex composed of ScpA, ScpB and the Smc homodimer, in which ScpA and ScpB bind to the head domain of Smc. The presence of the three proteins is required for the association of the complex with DNA.

The protein localises to the cytoplasm. In terms of biological role, participates in chromosomal partition during cell division. May act via the formation of a condensin-like complex containing Smc and ScpA that pull DNA away from mid-cell into both cell halves. This Listeria monocytogenes serotype 4b (strain CLIP80459) protein is Segregation and condensation protein B.